The primary structure comprises 142 residues: Ribosome maturation factor RimP (142 aa).

This sequence belongs to the RimP family.

Its subcellular location is the cytoplasm. In terms of biological role, required for maturation of 30S ribosomal subunits. This chain is Ribosome maturation factor RimP, found in Nitrosospira multiformis (strain ATCC 25196 / NCIMB 11849 / C 71).